We begin with the raw amino-acid sequence, 264 residues long: Teichoic acids export ATP-binding protein TagH (264 aa).

The ABC transporter domain occupies 5–243 (VNIKNVTKEY…YEAFLNDFKK (239 aa)). An ATP-binding site is contributed by 57-64 (GINGSGKS).

Belongs to the ABC transporter superfamily. Teichoic acids exporter (TC 3.A.1.104.1) family. In terms of assembly, the complex is composed of two ATP-binding proteins (TagH) and two transmembrane proteins (TagG).

It is found in the cell membrane. The enzyme catalyses ATP + H2O + teichoic acidSide 1 = ADP + phosphate + teichoic acidSide 2.. Functionally, part of the ABC transporter complex TagGH involved in teichoic acids export. Responsible for energy coupling to the transport system. This is Teichoic acids export ATP-binding protein TagH from Staphylococcus aureus (strain Mu50 / ATCC 700699).